The chain runs to 851 residues: Nucleolar RNA helicase 2 (851 aa).

A disordered region spans residues 1-260; it reads MPGKLRSGAK…IPVEQKEGAF (260 aa). Phosphoserine is present on residues serine 7 and serine 13. Composition is skewed to basic and acidic residues over residues 26–42 and 99–113; these read PSEKKTRKEKTKSKTEE and EPLEKQADSETKEII. At lysine 39 the chain carries N6-acetyllysine. 3 repeat units span residues 117 to 153, 154 to 190, and 191 to 227. Residues 117 to 227 form a 3 X 37 AA tandem repeats region; that stretch reads PSEEEADMPK…SPRLKDGLSQ (111 aa). The residue at position 118 (serine 118) is a Phosphoserine. Residues 133-145 are compositionally biased toward basic and acidic residues; sequence GKEANGDAGEKSP. Lysine 134 carries the N6-acetyllysine modification. Phosphoserine is present on residues serine 144, serine 155, serine 181, serine 192, serine 218, serine 236, serine 243, serine 244, and serine 245. Basic and acidic residues predominate over residues 170–182; it reads GKEANGDAGEKSP. Residues 207-223 are compositionally biased toward basic and acidic residues; that stretch reads GKEASGDAGEKSPRLKD. Polar residues predominate over residues 226–237; it reads SQPSEPKSNSSD. Basic and acidic residues predominate over residues 246 to 257; it reads ETEKEIPVEQKE. Positions 258–286 match the Q motif motif; the sequence is GAFSNFPISEETVKLLKARGVNFLFPIQA. The Helicase ATP-binding domain occupies 289–468; that stretch reads FHHVYSGKDL…KKYMKSTYEQ (180 aa). 302–309 contributes to the ATP binding site; that stretch reads ARTGTGKT. Threonine 368 is subject to Phosphothreonine. A DEAD box motif is present at residues 411 to 414; it reads DEVD. Residues 501–645 form the Helicase C-terminal domain; the sequence is DVIRVYSGHQ…GVPSATEIIK (145 aa). A Phosphoserine modification is found at serine 639. At lysine 672 the chain carries N6-acetyllysine. The disordered stretch occupies residues 783–851; that stretch reads QPELEGPPDG…KRSFSKAFGQ (69 aa). Tandem repeats lie at residues 807-811, 817-823, and 829-833. Positions 807 to 833 are 3 X 5 AA repeats; sequence FRGQRGGSRNFRGQGQRGGSRNFRGQR. Lysine 847 is modified (N6-acetyllysine).

This sequence belongs to the DEAD box helicase family. DDX21/DDX50 subfamily. Homodimer; homodimerizes via its N-terminus. Found in a multi-helicase-TICAM1 complex at least composed of DHX36, DDX1, DDX21 and TICAM1; this complex exists in resting cells with or without poly(I:C) RNA ligand stimulation. Interacts (via C-terminus) with TICAM1 (via TIR domain). Interacts with DHX36 (via C-terminus); this interaction serves as bridges to TICAM1. Interacts (via C-terminus) with DDX1 (via B30.2/SPRY domain); this interaction serves as bridges to TICAM1. Component of the B-WICH complex, at least composed of SMARCA5/SNF2H, BAZ1B/WSTF, SF3B1, DEK, MYO1C, ERCC6, MYBBP1A and DDX21. Interacts with C1QBP. Interacts with JUN. Interacts with WDR46. Interacts with MCM3AP. Interacts with WDR43. Interacts with KPNA3. Interacts with GID4. In terms of processing, acetylation by CREBBP/CBP inhibits the helicase activity. Deacetylation by SIRT7 promotes the helicase activity and overcomes R-loop-mediated stalling of RNA polymerases. As to expression, highly expressed in liver and testis. Expressed at lower level in brain, lungs, and skeletal muscle.

Its subcellular location is the nucleus. It localises to the nucleolus. The protein resides in the nucleoplasm. The protein localises to the cytoplasm. It is found in the cytosol. Its subcellular location is the mitochondrion. It catalyses the reaction ATP + H2O = ADP + phosphate + H(+). Acetylation inhibits the helicase activity. In terms of biological role, RNA helicase that acts as a sensor of the transcriptional status of both RNA polymerase (Pol) I and II: promotes ribosomal RNA (rRNA) processing and transcription from polymerase II (Pol II). Binds various RNAs, such as rRNAs, snoRNAs, 7SK and, at lower extent, mRNAs. In the nucleolus, localizes to rDNA locus, where it directly binds rRNAs and snoRNAs, and promotes rRNA transcription, processing and modification. Required for rRNA 2'-O-methylation, possibly by promoting the recruitment of late-acting snoRNAs SNORD56 and SNORD58 with pre-ribosomal complexes. In the nucleoplasm, binds 7SK RNA and is recruited to the promoters of Pol II-transcribed genes: acts by facilitating the release of P-TEFb from inhibitory 7SK snRNP in a manner that is dependent on its helicase activity, thereby promoting transcription of its target genes. Functions as cofactor for JUN-activated transcription: required for phosphorylation of JUN at 'Ser-77'. Can unwind double-stranded RNA (helicase) and can fold or introduce a secondary structure to a single-stranded RNA (foldase). Together with SIRT7, required to prevent R-loop-associated DNA damage and transcription-associated genomic instability: deacetylation by SIRT7 activates the helicase activity, thereby overcoming R-loop-mediated stalling of RNA polymerases. Involved in rRNA processing. May bind to specific miRNA hairpins. Component of a multi-helicase-TICAM1 complex that acts as a cytoplasmic sensor of viral double-stranded RNA (dsRNA) and plays a role in the activation of a cascade of antiviral responses including the induction of pro-inflammatory cytokines via the adapter molecule TICAM1. The sequence is that of Nucleolar RNA helicase 2 (Ddx21) from Mus musculus (Mouse).